A 209-amino-acid chain; its full sequence is Kynurenine formamidase (209 aa).

Trp-20 is a binding site for substrate. Zn(2+)-binding residues include His-50, His-54, and Asp-56. Catalysis depends on His-60, which acts as the Proton donor/acceptor. Positions 161 and 173 each coordinate Zn(2+).

This sequence belongs to the Cyclase 1 superfamily. KynB family. As to quaternary structure, homodimer. Zn(2+) is required as a cofactor.

The catalysed reaction is N-formyl-L-kynurenine + H2O = L-kynurenine + formate + H(+). Its pathway is amino-acid degradation; L-tryptophan degradation via kynurenine pathway; L-kynurenine from L-tryptophan: step 2/2. Functionally, catalyzes the hydrolysis of N-formyl-L-kynurenine to L-kynurenine, the second step in the kynurenine pathway of tryptophan degradation. The protein is Kynurenine formamidase of Bacillus mycoides (strain KBAB4) (Bacillus weihenstephanensis).